Here is a 128-residue protein sequence, read N- to C-terminus: Large ribosomal subunit protein bL12 (128 aa).

It belongs to the bacterial ribosomal protein bL12 family. Homodimer. Part of the ribosomal stalk of the 50S ribosomal subunit. Forms a multimeric L10(L12)X complex, where L10 forms an elongated spine to which 2 to 4 L12 dimers bind in a sequential fashion. Binds GTP-bound translation factors.

In terms of biological role, forms part of the ribosomal stalk which helps the ribosome interact with GTP-bound translation factors. Is thus essential for accurate translation. In Synechococcus sp. (strain CC9902), this protein is Large ribosomal subunit protein bL12.